A 630-amino-acid chain; its full sequence is DNA mismatch repair protein MutL (630 aa).

Positions 398–408 (TQTNAFGSMAT) are enriched in polar residues. The tract at residues 398-425 (TQTNAFGSMATSRDSSRGSYSASESRQR) is disordered.

It belongs to the DNA mismatch repair MutL/HexB family.

Functionally, this protein is involved in the repair of mismatches in DNA. It is required for dam-dependent methyl-directed DNA mismatch repair. May act as a 'molecular matchmaker', a protein that promotes the formation of a stable complex between two or more DNA-binding proteins in an ATP-dependent manner without itself being part of a final effector complex. The chain is DNA mismatch repair protein MutL from Shewanella baltica (strain OS185).